A 206-amino-acid chain; its full sequence is Acidic proline-rich protein PRP33 (206 aa).

The signal sequence occupies residues 1–13 (MLVVLLTAALLVL). The segment at 15-206 (SAHGSDEEVI…EQPSYLWFSS (192 aa)) is disordered. Residues 55–71 (ENGDGDDSDDGDDDGSG) show a composition bias toward acidic residues. A run of 6 repeats spans residues 80 to 97 (PPPHGGNHQRPPPGHHHG), 98 to 115 (PPPSGGPQTSSQPGNPQG), 116 to 133 (PPPQGGPQGPPQPGNPQG), 134 to 152 (PPPQGGPQQRPPQPGKPQG), 153 to 170 (PPPQGGPQGPPQPGNPQG), and 171 to 189 (PPPQGGHQQRPPQPRKPQD). Positions 80-189 (PPPHGGNHQR…RPPQPRKPQD (110 aa)) are 6 X 18 AA approximate tandem repeats. Residues 103-112 (GPQTSSQPGN) show a composition bias toward low complexity. The segment covering 113-174 (PQGPPPQGGP…PGNPQGPPPQ (62 aa)) has biased composition (pro residues).

It is found in the secreted. In terms of biological role, may protect teeth by binding to tannins. In Rattus norvegicus (Rat), this protein is Acidic proline-rich protein PRP33 (Prpg1).